Here is a 339-residue protein sequence, read N- to C-terminus: N-acetyl-gamma-glutamyl-phosphate reductase (339 aa).

C145 is an active-site residue.

Belongs to the NAGSA dehydrogenase family. Type 1 subfamily.

The protein localises to the cytoplasm. The catalysed reaction is N-acetyl-L-glutamate 5-semialdehyde + phosphate + NADP(+) = N-acetyl-L-glutamyl 5-phosphate + NADPH + H(+). It participates in amino-acid biosynthesis; L-arginine biosynthesis; N(2)-acetyl-L-ornithine from L-glutamate: step 3/4. In terms of biological role, catalyzes the NADPH-dependent reduction of N-acetyl-5-glutamyl phosphate to yield N-acetyl-L-glutamate 5-semialdehyde. The protein is N-acetyl-gamma-glutamyl-phosphate reductase of Kosmotoga olearia (strain ATCC BAA-1733 / DSM 21960 / TBF 19.5.1).